The primary structure comprises 401 residues: Chalcone synthase 2 (401 aa).

Cysteine 168 is a catalytic residue.

Belongs to the thiolase-like superfamily. Chalcone/stilbene synthases family.

The enzyme catalyses (E)-4-coumaroyl-CoA + 3 malonyl-CoA + 3 H(+) = 2',4,4',6'-tetrahydroxychalcone + 3 CO2 + 4 CoA. It participates in secondary metabolite biosynthesis; flavonoid biosynthesis. Its function is as follows. The primary product of this enzyme is 4,2',4',6'-tetrahydroxychalcone (also termed naringenin-chalcone or chalcone) which can under specific conditions spontaneously isomerize into naringenin. The sequence is that of Chalcone synthase 2 (CHS2) from Sorghum bicolor (Sorghum).